A 250-amino-acid chain; its full sequence is NAD(P)H-quinone oxidoreductase subunit K (250 aa).

Residues C60, C61, C125, and C156 each contribute to the [4Fe-4S] cluster site. The tract at residues 230–250 (ELNTSEIDASPASQPSSTYES) is disordered. Positions 231 to 250 (LNTSEIDASPASQPSSTYES) are enriched in polar residues.

Belongs to the complex I 20 kDa subunit family. In terms of assembly, NDH-1 can be composed of about 15 different subunits; different subcomplexes with different compositions have been identified which probably have different functions. The cofactor is [4Fe-4S] cluster.

The protein resides in the cellular thylakoid membrane. It carries out the reaction a plastoquinone + NADH + (n+1) H(+)(in) = a plastoquinol + NAD(+) + n H(+)(out). It catalyses the reaction a plastoquinone + NADPH + (n+1) H(+)(in) = a plastoquinol + NADP(+) + n H(+)(out). Functionally, NDH-1 shuttles electrons from an unknown electron donor, via FMN and iron-sulfur (Fe-S) centers, to quinones in the respiratory and/or the photosynthetic chain. The immediate electron acceptor for the enzyme in this species is believed to be plastoquinone. Couples the redox reaction to proton translocation, and thus conserves the redox energy in a proton gradient. Cyanobacterial NDH-1 also plays a role in inorganic carbon-concentration. This is NAD(P)H-quinone oxidoreductase subunit K from Prochlorococcus marinus (strain MIT 9303).